The primary structure comprises 424 residues: Phosphoribosylamine--glycine ligase (424 aa).

The 207-residue stretch at 107-313 (KTFMKKYGIP…FLETLLNFYE (207 aa)) folds into the ATP-grasp domain. An ATP-binding site is contributed by 133–194 (VEKVGAPIVV…EEFLEGEEAS (62 aa)). Mg(2+)-binding residues include E283 and N285.

It belongs to the GARS family. Requires Mg(2+) as cofactor. The cofactor is Mn(2+).

The enzyme catalyses 5-phospho-beta-D-ribosylamine + glycine + ATP = N(1)-(5-phospho-beta-D-ribosyl)glycinamide + ADP + phosphate + H(+). The protein operates within purine metabolism; IMP biosynthesis via de novo pathway; N(1)-(5-phospho-D-ribosyl)glycinamide from 5-phospho-alpha-D-ribose 1-diphosphate: step 2/2. The chain is Phosphoribosylamine--glycine ligase from Aquifex aeolicus (strain VF5).